Here is a 371-residue protein sequence, read N- to C-terminus: Peptide chain release factor 2 (371 aa).

The residue at position 253 (Gln-253) is an N5-methylglutamine.

The protein belongs to the prokaryotic/mitochondrial release factor family. Post-translationally, methylated by PrmC. Methylation increases the termination efficiency of RF2.

It is found in the cytoplasm. In terms of biological role, peptide chain release factor 2 directs the termination of translation in response to the peptide chain termination codons UGA and UAA. This chain is Peptide chain release factor 2, found in Mycobacterium sp. (strain JLS).